Reading from the N-terminus, the 284-residue chain is Prolyl 4-hydroxylase subunit alpha (284 aa).

The Fe2OG dioxygenase domain occupies 169-284; sequence NFNSIKTQTQ…PRIAITTWIY (116 aa). Positions 191, 193, and 266 each coordinate Fe cation. Arg-276 serves as a coordination point for 2-oxoglutarate.

Belongs to the P4HA family. As to quaternary structure, heterotetramer of two alpha-1 chains and two beta chains (the beta chain is the multi-functional PDI). It depends on Fe(2+) as a cofactor. The cofactor is L-ascorbate.

The protein localises to the cytoplasm. The catalysed reaction is L-prolyl-[Skp1 protein] + 2-oxoglutarate + O2 = trans-4-hydroxy-L-prolyl-[Skp1 protein] + succinate + CO2. With respect to regulation, inhibited by the prolyl-hydroxylase inhibitors alpha,alpha'-dipyridyl and ethyl 3,4-dihydroxybenzoate. Its function is as follows. Catalyzes the post-translational formation of 4-hydroxyproline. Probably hydroxylates skp1 on Pro-143. In Dictyostelium discoideum (Social amoeba), this protein is Prolyl 4-hydroxylase subunit alpha (phyA).